A 75-amino-acid polypeptide reads, in one-letter code: MNITKRYVVIFFLVMLTKSLSNSDVLVSSVIETSKNDVCFIPCTRRYGDWECYDDCLGKNFNDGGCVDGRCCCKK.

The N-terminal stretch at 1–23 (MNITKRYVVIFFLVMLTKSLSNS) is a signal peptide. Disulfide bonds link Cys-39-Cys-73, Cys-43-Cys-66, Cys-52-Cys-71, and Cys-56-Cys-72.

It belongs to the DEFL family.

The protein resides in the secreted. The sequence is that of Defensin-like protein 58 from Arabidopsis thaliana (Mouse-ear cress).